A 368-amino-acid chain; its full sequence is Probable endopolygalacturonase I (368 aa).

The N-terminal stretch at 1–18 is a signal peptide; it reads MHSFQLLGLAALGSLVAA. The propeptide occupies 19-31; it reads APSPSRVSDLTER. Cys35 and Cys50 are disulfide-bonded. PbH1 repeat units lie at residues 162–192, 193–214, 215–235, 244–265, 273–295, and 307–328; these read ANNL…DISE, SNGV…AINS, GKNI…SIGS, VQGV…RIKT, VSDV…VIQQ, and SNGI…DSKA. The active-site Proton donor is Asp207. Cys209 and Cys225 are disulfide-bonded. His229 is a catalytic residue. Cystine bridges form between Cys335–Cys340 and Cys359–Cys368.

Belongs to the glycosyl hydrolase 28 family.

Its subcellular location is the secreted. The catalysed reaction is (1,4-alpha-D-galacturonosyl)n+m + H2O = (1,4-alpha-D-galacturonosyl)n + (1,4-alpha-D-galacturonosyl)m.. Its function is as follows. Involved in maceration and soft-rotting of plant tissue. Hydrolyzes the 1,4-alpha glycosidic bonds of de-esterified pectate in the smooth region of the plant cell wall. The chain is Probable endopolygalacturonase I (pgaI) from Aspergillus terreus (strain NIH 2624 / FGSC A1156).